A 312-amino-acid chain; its full sequence is Probable carboxylesterase 7 (312 aa).

Met1 bears the N-acetylmethionine mark. Residues 75 to 77 (HGG) carry the Involved in the stabilization of the negatively charged intermediate by the formation of the oxyanion hole motif. Residues Ser159, Asp255, and His287 contribute to the active site.

Belongs to the 'GDXG' lipolytic enzyme family. Expressed in leaves, stems, flowers and siliques.

The catalysed reaction is a carboxylic ester + H2O = an alcohol + a carboxylate + H(+). Functionally, carboxylesterase acting on esters with varying acyl chain length. This Arabidopsis thaliana (Mouse-ear cress) protein is Probable carboxylesterase 7 (CXE7).